Reading from the N-terminus, the 432-residue chain is Glutamyl-tRNA reductase (432 aa).

Residues 49-52 (TCNR), Ser101, 106-108 (EPQ), and Gln112 each bind substrate. Cys50 serves as the catalytic Nucleophile. 181-186 (GAGETI) is a binding site for NADP(+). A disordered region spans residues 407 to 432 (FPEKPGYQHPPIATPIVRTDDADPAP).

Belongs to the glutamyl-tRNA reductase family. In terms of assembly, homodimer.

It catalyses the reaction (S)-4-amino-5-oxopentanoate + tRNA(Glu) + NADP(+) = L-glutamyl-tRNA(Glu) + NADPH + H(+). It participates in porphyrin-containing compound metabolism; protoporphyrin-IX biosynthesis; 5-aminolevulinate from L-glutamyl-tRNA(Glu): step 1/2. Functionally, catalyzes the NADPH-dependent reduction of glutamyl-tRNA(Glu) to glutamate 1-semialdehyde (GSA). The sequence is that of Glutamyl-tRNA reductase from Xanthomonas oryzae pv. oryzae (strain MAFF 311018).